Consider the following 211-residue polypeptide: tRNA (guanine-N(7)-)-methyltransferase (211 aa).

Residues Glu44, Asp69, Asp96, and Asp118 each coordinate S-adenosyl-L-methionine. Residue Asp118 is part of the active site. Lys122 provides a ligand contact to substrate. The interval 124–129 (KHEKRR) is interaction with RNA. Residues Asp154 and 191–194 (TEYE) contribute to the substrate site.

This sequence belongs to the class I-like SAM-binding methyltransferase superfamily. TrmB family.

The catalysed reaction is guanosine(46) in tRNA + S-adenosyl-L-methionine = N(7)-methylguanosine(46) in tRNA + S-adenosyl-L-homocysteine. The protein operates within tRNA modification; N(7)-methylguanine-tRNA biosynthesis. Its function is as follows. Catalyzes the formation of N(7)-methylguanine at position 46 (m7G46) in tRNA. The chain is tRNA (guanine-N(7)-)-methyltransferase from Streptococcus uberis (strain ATCC BAA-854 / 0140J).